We begin with the raw amino-acid sequence, 240 residues long: Biosynthetic peptidoglycan transglycosylase (240 aa).

Residues 16 to 36 traverse the membrane as a helical segment; the sequence is VLMALLCLFLIYELAMFSMVV.

This sequence belongs to the glycosyltransferase 51 family.

The protein resides in the cell inner membrane. It carries out the reaction [GlcNAc-(1-&gt;4)-Mur2Ac(oyl-L-Ala-gamma-D-Glu-L-Lys-D-Ala-D-Ala)](n)-di-trans,octa-cis-undecaprenyl diphosphate + beta-D-GlcNAc-(1-&gt;4)-Mur2Ac(oyl-L-Ala-gamma-D-Glu-L-Lys-D-Ala-D-Ala)-di-trans,octa-cis-undecaprenyl diphosphate = [GlcNAc-(1-&gt;4)-Mur2Ac(oyl-L-Ala-gamma-D-Glu-L-Lys-D-Ala-D-Ala)](n+1)-di-trans,octa-cis-undecaprenyl diphosphate + di-trans,octa-cis-undecaprenyl diphosphate + H(+). It functions in the pathway cell wall biogenesis; peptidoglycan biosynthesis. Its function is as follows. Peptidoglycan polymerase that catalyzes glycan chain elongation from lipid-linked precursors. The polypeptide is Biosynthetic peptidoglycan transglycosylase (Bordetella avium (strain 197N)).